Here is a 354-residue protein sequence, read N- to C-terminus: Green-sensitive opsin-3 (354 aa).

At 1 to 39 (MSGLNGFEGDNFYIPMSNRTGLVRDPFVYEQYYLAEPWQ) the chain is on the extracellular side. Residue Asn18 is glycosylated (N-linked (GlcNAc...) asparagine). A helical membrane pass occupies residues 40 to 64 (FKLLACYMFFLICLGLPINGFTLFV). Residues 65–76 (TAQHKKLQQPLN) are Cytoplasmic-facing. Residues 77–102 (FILVNLAVAGMIMVCFGFTITISSAV) traverse the membrane as a helical segment. Residues 103–116 (NGYFYFGPTACAIE) are Extracellular-facing. A disulfide bond links Cys113 and Cys190. The chain crosses the membrane as a helical span at residues 117–136 (GFMATLGGEVALWSLVVLAI). The Cytoplasmic segment spans residues 137 to 155 (ERYIVVCKPMGSFKFSASH). The helical transmembrane segment at 156 to 179 (ALGGIGFTWFMAMTCAAPPLVGWS) threads the bilayer. At 180-205 (RYIPEGLQCSCGPDYYTLNPKYNNES) the chain is on the extracellular side. Asn203 is a glycosylation site (N-linked (GlcNAc...) asparagine). A helical membrane pass occupies residues 206–233 (YVIYMFVVHFIVPVTVIFFTYGRLVCTV). The Cytoplasmic segment spans residues 234-255 (KSAAAAQQDSASTQKAEKEVTR). A helical membrane pass occupies residues 256 to 279 (MVILMVVGFLVAWTPYATVAAWIF). Residues 280 to 287 (FNKGAAFT) lie on the Extracellular side of the membrane. The chain crosses the membrane as a helical span at residues 288–312 (AQFMAVPAFFSKSSALFNPIIYVLL). Lys299 carries the post-translational modification N6-(retinylidene)lysine. The Cytoplasmic portion of the chain corresponds to 313-354 (NKQFRNCMLTTLFCGKNPLGDEESSTVSTKTEVSTVSSVSPA).

The protein belongs to the G-protein coupled receptor 1 family. Opsin subfamily. As to expression, the color pigments are found in the cone photoreceptor cells.

It localises to the membrane. Visual pigments are the light-absorbing molecules that mediate vision. They consist of an apoprotein, opsin, covalently linked to cis-retinal. This Psalidodon fasciatus (Banded astyanax) protein is Green-sensitive opsin-3 (RH11).